Consider the following 327-residue polypeptide: Acetaldehyde dehydrogenase 5 (327 aa).

15 to 18 serves as a coordination point for NAD(+); the sequence is SGNI. Residue Cys-133 is the Acyl-thioester intermediate of the active site. Residues 164 to 172 and Asn-297 contribute to the NAD(+) site; that span reads SAGPGTRAN.

The protein belongs to the acetaldehyde dehydrogenase family.

The enzyme catalyses acetaldehyde + NAD(+) + CoA = acetyl-CoA + NADH + H(+). The chain is Acetaldehyde dehydrogenase 5 from Rhodococcus jostii (strain RHA1).